We begin with the raw amino-acid sequence, 259 residues long: 2,3-dihydroxy-2,3-dihydro-p-cumate dehydrogenase (259 aa).

18 to 42 (VTGGAHGIGLGIVERLLGLGARVTA) contacts NAD(+). Residue Y163 is the Proton acceptor of the active site.

Belongs to the short-chain dehydrogenases/reductases (SDR) family.

The enzyme catalyses (2R,3S)-2,3-dihydroxy-2,3-dihydro-p-cumate + NAD(+) = 2,3-dihydroxy-p-cumate + NADH + H(+). It participates in aromatic compound metabolism; p-cumate degradation; acetaldehyde and pyruvate from p-cumate: step 2/7. This is 2,3-dihydroxy-2,3-dihydro-p-cumate dehydrogenase (cmtB) from Pseudomonas putida (strain ATCC 700007 / DSM 6899 / JCM 31910 / BCRC 17059 / LMG 24140 / F1).